The sequence spans 88 residues: UPF0297 protein BLi02868/BL02032 (88 aa).

Belongs to the UPF0297 family.

The polypeptide is UPF0297 protein BLi02868/BL02032 (Bacillus licheniformis (strain ATCC 14580 / DSM 13 / JCM 2505 / CCUG 7422 / NBRC 12200 / NCIMB 9375 / NCTC 10341 / NRRL NRS-1264 / Gibson 46)).